Reading from the N-terminus, the 404-residue chain is Cysteine desulfurase IscS (404 aa).

Residues 75 to 76, Asn155, Gln183, and 203 to 205 each bind pyridoxal 5'-phosphate; these read AT and SAH. An N6-(pyridoxal phosphate)lysine modification is found at Lys206. Thr243 provides a ligand contact to pyridoxal 5'-phosphate. Catalysis depends on Cys328, which acts as the Cysteine persulfide intermediate. A [2Fe-2S] cluster-binding site is contributed by Cys328.

Belongs to the class-V pyridoxal-phosphate-dependent aminotransferase family. NifS/IscS subfamily. As to quaternary structure, homodimer. Forms a heterotetramer with IscU, interacts with other sulfur acceptors. Pyridoxal 5'-phosphate serves as cofactor.

The protein resides in the cytoplasm. The enzyme catalyses (sulfur carrier)-H + L-cysteine = (sulfur carrier)-SH + L-alanine. The protein operates within cofactor biosynthesis; iron-sulfur cluster biosynthesis. Master enzyme that delivers sulfur to a number of partners involved in Fe-S cluster assembly, tRNA modification or cofactor biosynthesis. Catalyzes the removal of elemental sulfur atoms from cysteine to produce alanine. Functions as a sulfur delivery protein for Fe-S cluster synthesis onto IscU, an Fe-S scaffold assembly protein, as well as other S acceptor proteins. This is Cysteine desulfurase IscS from Shewanella woodyi (strain ATCC 51908 / MS32).